Here is a 149-residue protein sequence, read N- to C-terminus: Large ribosomal subunit protein uL13 (149 aa).

It belongs to the universal ribosomal protein uL13 family. In terms of assembly, part of the 50S ribosomal subunit.

Functionally, this protein is one of the early assembly proteins of the 50S ribosomal subunit, although it is not seen to bind rRNA by itself. It is important during the early stages of 50S assembly. The polypeptide is Large ribosomal subunit protein uL13 (Chlorobium limicola (strain DSM 245 / NBRC 103803 / 6330)).